Consider the following 148-residue polypeptide: Puroindoline-A (148 aa).

The signal sequence occupies residues 1 to 19 (MKALFLIGLLALVASTAFA). A propeptide spanning residues 20–28 (QYSEVVGSY) is cleaved from the precursor. The propeptide at 147 to 148 (YW) is removed in mature form.

In terms of processing, five disulfide bonds are present. In terms of tissue distribution, endosperm and aleurone layer of developing kernels. In the aleurone layer, mainly localized to starch granules and the surface of the plasma membrane, forming a uniform layer, also abundant in the intercellular space. In the endosperm, mainly localized to starch granules and the plasma membrane, but less abundant in the intercellular space. Not found in roots or coleoptiles.

Its subcellular location is the membrane. It localises to the secreted. It is found in the extracellular space. Acts as a membranotoxin, probably through its antibacterial and antifungal activities, contributing to the defense mechanism of the plant against predators. Forms monovalent cation-selective ion channels in membranes. Has antibacterial activity against the Gram-positive bacteria S.aureus and C.michiganensis, and the Gram-negative bacteria E.coli, P.syringae pv phaseoli, A.tumefaciens and E.carotovora subsp carotovora. Acts synergistically with PINB against bacteria. Contributes to grain texture and hardness. The polypeptide is Puroindoline-A (PINA) (Triticum aestivum (Wheat)).